A 149-amino-acid chain; its full sequence is Oocyte-expressed protein (149 aa).

The KH; atypical domain maps to 49–110; the sequence is PLVFYLEAWL…RVQNRVKSVL (62 aa).

This sequence belongs to the KHDC1 family. As to quaternary structure, component of the subcortical maternal complex (SCMC), at least composed of NLRP5, KHDC3, OOEP, and TLE6. Within the complex, interacts with NLRP5, KHDC3 and TLE6. As part of the SCMC interacts with the SCMC-associated protein NLRP4F. The SCMC may facilitate translocation of its components between the nuclear and cytoplasmic compartments. Forms a scaffold complex with KHDC3/FILIA, and interacts with BLM and TRIM25 at DNA replication forks.

It localises to the cytoplasm. The protein resides in the nucleus. Functionally, component of the subcortical maternal complex (SCMC), a multiprotein complex that plays a key role in early embryonic development. The SCMC complex is a structural constituent of cytoplasmic lattices, which consist in fibrous structures found in the cytoplasm of oocytes and preimplantation embryos. They are required to store maternal proteins critical for embryonic development, such as proteins that control epigenetic reprogramming of the preimplantation embryo, and prevent their degradation or activation. As part of the OOEP-KHDC3 scaffold, recruits BLM and TRIM25 to DNA replication forks, thereby promoting the ubiquitination of BLM by TRIM25, enhancing BLM retainment at replication forks and therefore promoting stalled replication fork restart. Positively regulates the homologous recombination-mediated DNA double-strand break (DSB) repair pathway by regulating ATM activation and RAD51 recruitment to DSBs in oocytes. Thereby contributes to oocyte survival and the resumption and completion of meiosis. This Canis lupus familiaris (Dog) protein is Oocyte-expressed protein (OOEP).